Reading from the N-terminus, the 486-residue chain is ATP synthase subunit beta (486 aa).

164–171 lines the ATP pocket; the sequence is GGAGVGKT.

This sequence belongs to the ATPase alpha/beta chains family. F-type ATPases have 2 components, CF(1) - the catalytic core - and CF(0) - the membrane proton channel. CF(1) has five subunits: alpha(3), beta(3), gamma(1), delta(1), epsilon(1). CF(0) has four main subunits: a(1), b(1), b'(1) and c(9-12).

The protein localises to the cellular thylakoid membrane. The enzyme catalyses ATP + H2O + 4 H(+)(in) = ADP + phosphate + 5 H(+)(out). Its function is as follows. Produces ATP from ADP in the presence of a proton gradient across the membrane. The catalytic sites are hosted primarily by the beta subunits. The protein is ATP synthase subunit beta of Prochlorococcus marinus subsp. pastoris (strain CCMP1986 / NIES-2087 / MED4).